The chain runs to 144 residues: Putative lipoprotein MAH_0816 (144 aa).

A signal peptide spans 1 to 24 (MRWPMQNRTTAVIAVALATTALVA). Cys-25 carries N-palmitoyl cysteine lipidation. Cys-25 is lipidated: S-diacylglycerol cysteine.

Belongs to the mycobacterial 19 kDa antigen family.

It localises to the cell membrane. The sequence is that of Putative lipoprotein MAH_0816 from Mycobacterium avium subsp. hominissuis (strain TH135).